The chain runs to 100 residues: NAD(P)H-quinone oxidoreductase subunit 4L, chloroplastic (100 aa).

3 helical membrane-spanning segments follow: residues 1 to 21, 30 to 50, and 60 to 80; these read MLEN…YGLT, LMCL…FSSF, and VFAI…LAII.

It belongs to the complex I subunit 4L family. As to quaternary structure, NDH is composed of at least 16 different subunits, 5 of which are encoded in the nucleus.

The protein localises to the plastid. It is found in the chloroplast thylakoid membrane. It carries out the reaction a plastoquinone + NADH + (n+1) H(+)(in) = a plastoquinol + NAD(+) + n H(+)(out). The enzyme catalyses a plastoquinone + NADPH + (n+1) H(+)(in) = a plastoquinol + NADP(+) + n H(+)(out). Functionally, NDH shuttles electrons from NAD(P)H:plastoquinone, via FMN and iron-sulfur (Fe-S) centers, to quinones in the photosynthetic chain and possibly in a chloroplast respiratory chain. The immediate electron acceptor for the enzyme in this species is believed to be plastoquinone. Couples the redox reaction to proton translocation, and thus conserves the redox energy in a proton gradient. This Staurastrum punctulatum (Green alga) protein is NAD(P)H-quinone oxidoreductase subunit 4L, chloroplastic.